An 88-amino-acid polypeptide reads, in one-letter code: Eclosion hormone (88 aa).

Residues 1 to 26 (MANKLTAVIVVALAVAFMVNLDYANC) form the signal peptide. Cystine bridges form between C40–C64, C44–C60, and C47–C75.

The protein belongs to the insect eclosion hormone family.

Its subcellular location is the secreted. Neuropeptide that triggers the performance of ecdysis behaviors at the end of a molt. It triggers adult behavior patterns: larval, pupal and adult ecdysis, and plasticization during the molt. This Bombyx mori (Silk moth) protein is Eclosion hormone.